An 874-amino-acid polypeptide reads, in one-letter code: Alanine--tRNA ligase (874 aa).

4 residues coordinate Zn(2+): histidine 564, histidine 568, cysteine 665, and histidine 669.

The protein belongs to the class-II aminoacyl-tRNA synthetase family. Requires Zn(2+) as cofactor.

The protein resides in the cytoplasm. The enzyme catalyses tRNA(Ala) + L-alanine + ATP = L-alanyl-tRNA(Ala) + AMP + diphosphate. Its function is as follows. Catalyzes the attachment of alanine to tRNA(Ala) in a two-step reaction: alanine is first activated by ATP to form Ala-AMP and then transferred to the acceptor end of tRNA(Ala). Also edits incorrectly charged Ser-tRNA(Ala) and Gly-tRNA(Ala) via its editing domain. The chain is Alanine--tRNA ligase from Paraburkholderia xenovorans (strain LB400).